The primary structure comprises 81 residues: Cell division protein ZapB (81 aa).

Residues 5–81 are a coiled coil; it reads LEVFEKLESK…QALLGRMEEV (77 aa). Residues 43 to 64 are disordered; it reads VHSAQNGREELERENQQLREQQ. The segment covering 49-59 has biased composition (basic and acidic residues); that stretch reads GREELERENQQ.

Belongs to the ZapB family. Homodimer. The ends of the coiled-coil dimer bind to each other, forming polymers. Interacts with FtsZ.

The protein resides in the cytoplasm. Functionally, non-essential, abundant cell division factor that is required for proper Z-ring formation. It is recruited early to the divisome by direct interaction with FtsZ, stimulating Z-ring assembly and thereby promoting cell division earlier in the cell cycle. Its recruitment to the Z-ring requires functional FtsA or ZipA. The protein is Cell division protein ZapB of Enterobacter sp. (strain 638).